The primary structure comprises 192 residues: Phosphomevalonate kinase (192 aa).

ATP is bound by residues 17-23 and Arg-141; that span reads KRKSGKD. Asn-170 is a binding site for substrate. ATP is bound by residues His-171 and Gln-180.

Monomer.

The protein localises to the cytoplasm. The protein resides in the cytosol. It catalyses the reaction (R)-5-phosphomevalonate + ATP = (R)-5-diphosphomevalonate + ADP. It functions in the pathway isoprenoid biosynthesis; isopentenyl diphosphate biosynthesis via mevalonate pathway; isopentenyl diphosphate from (R)-mevalonate: step 2/3. In terms of biological role, catalyzes the reversible ATP-dependent phosphorylation of mevalonate 5-phosphate to produce mevalonate diphosphate and ADP, a key step in the mevalonic acid mediated biosynthesis of isopentenyl diphosphate and other polyisoprenoid metabolites. The sequence is that of Phosphomevalonate kinase (PMVK) from Bos taurus (Bovine).